The sequence spans 312 residues: Cytochrome c biogenesis protein CcsA (312 aa).

The next 8 helical transmembrane spans lie at Ile-9–Phe-29, Gly-44–Gly-64, Leu-71–Phe-91, Gly-111–Leu-131, Met-143–Ile-163, Val-216–Asn-236, Trp-251–Leu-271, and Ala-277–Leu-297.

Belongs to the CcmF/CycK/Ccl1/NrfE/CcsA family. As to quaternary structure, may interact with Ccs1.

Its subcellular location is the plastid. It is found in the chloroplast thylakoid membrane. Its function is as follows. Required during biogenesis of c-type cytochromes (cytochrome c6 and cytochrome f) at the step of heme attachment. The polypeptide is Cytochrome c biogenesis protein CcsA (Atropa belladonna (Belladonna)).